Reading from the N-terminus, the 421-residue chain is MAVDVTEYHLSVIKSPPGWEVGVYAAGALALLGIAAVSLWKLWTSGSFPSPSPFPNYDYRYLQQKYGEAYVEAKLKRVPPWNDQRTTTRGPPSRKGSLSIEDTFESISELGPLELMGRELDLAPYGTLRKSQSADSLNSISSVSNTFGQDFTLGQVEVSMDYDGASHTLHVAVLQGKDLLEREEATFESCFMRVSLLPDEQIVGISRIQRNAYSIFFDEKFSVPLDPTALEEKSLRFSVFGIDEDERNVSTGVVELKLSVLDLPLQPFSGWLYLQDQNKAADAVGEILLSLSYLPTAERLTVVVVKAKNLIWTNEKSTADPFVKVYLLQDGRKMSKKKTAVKRDDPNPVFNEAMIFSVPAIVLQDLSLRVTVAESSSDGRGDNVGHVIIGPGVSGMGTTHWNQMLATLRRPVSMWHPVRRN.

Topologically, residues 1-18 are vesicular; it reads MAVDVTEYHLSVIKSPPG. Residues 19–39 traverse the membrane as a helical segment; that stretch reads WEVGVYAAGALALLGIAAVSL. Over 40–421 the chain is Cytoplasmic; it reads WKLWTSGSFP…VSMWHPVRRN (382 aa). Ser97 is modified (phosphoserine; by PKA). Ser99 and Ser214 each carry phosphoserine. C2 domains are found at residues 152–272 and 283–416; these read TLGQ…SGWL and AVGE…SMWH.

This sequence belongs to the synaptotagmin family. As to quaternary structure, homodimer. Can also form heterodimers. Interacts with SYT1. Phosphorylation of Ser-97 is required for mossy-fiber long-term potentiation. Expressed in the brain, specifically by neurons in the hippocampus, and in the adrenal medulla (at protein level).

The protein localises to the cytoplasmic vesicle. Its subcellular location is the secretory vesicle. The protein resides in the synaptic vesicle membrane. In terms of biological role, synaptic vesicle phosphoprotein that enhances spontaneous neurotransmitter release but does not effect induced neurotransmitter release. Unlike other synaptotagmins, it does not bind Ca(2+) or phospholipids. Essential for mossy-fiber long-term potentiation in the hippocampus. In Mus musculus (Mouse), this protein is Synaptotagmin-12.